Consider the following 360-residue polypeptide: Peptide chain release factor 1 (360 aa).

Q235 carries the N5-methylglutamine modification.

The protein belongs to the prokaryotic/mitochondrial release factor family. Post-translationally, methylated by PrmC. Methylation increases the termination efficiency of RF1.

Its subcellular location is the cytoplasm. Functionally, peptide chain release factor 1 directs the termination of translation in response to the peptide chain termination codons UAG and UAA. This Cupriavidus pinatubonensis (strain JMP 134 / LMG 1197) (Cupriavidus necator (strain JMP 134)) protein is Peptide chain release factor 1.